A 370-amino-acid polypeptide reads, in one-letter code: Spermidine/putrescine import ATP-binding protein PotA (370 aa).

The region spanning 6–236 is the ABC transporter domain; that stretch reads IELHQVTKRY…PINHFVADFI (231 aa). 38–45 serves as a coordination point for ATP; it reads GPSGCGKT.

The protein belongs to the ABC transporter superfamily. Spermidine/putrescine importer (TC 3.A.1.11.1) family. As to quaternary structure, the complex is composed of two ATP-binding proteins (PotA), two transmembrane proteins (PotB and PotC) and a solute-binding protein (PotD).

The protein localises to the cell membrane. It carries out the reaction ATP + H2O + polyamine-[polyamine-binding protein]Side 1 = ADP + phosphate + polyamineSide 2 + [polyamine-binding protein]Side 1.. Its function is as follows. Part of the ABC transporter complex PotABCD involved in spermidine/putrescine import. Responsible for energy coupling to the transport system. The sequence is that of Spermidine/putrescine import ATP-binding protein PotA from Levilactobacillus brevis (strain ATCC 367 / BCRC 12310 / CIP 105137 / JCM 1170 / LMG 11437 / NCIMB 947 / NCTC 947) (Lactobacillus brevis).